The sequence spans 923 residues: Protocadherin gamma-B4 (923 aa).

The signal sequence occupies residues 1-30 (MGSGAGELGRAERLPVLFLFLLSLFCPALC). 6 consecutive Cadherin domains span residues 31 to 133 (EQIR…TPKF), 134 to 242 (TQNS…APVF), 243 to 345 (SQDI…APEV), 346 to 450 (IFQS…APVF), 451 to 560 (SQSS…APRV), and 568 to 673 (DGSA…LPDI). Residues 31-689 (EQIRYRIPEE…SDLEAELQFY (659 aa)) are Extracellular-facing. N-linked (GlcNAc...) asparagine glycosylation is found at Asn417 and Asn543. Residues 690 to 710 (LVVALALISVLFLVAMILAIA) traverse the membrane as a helical segment. The Cytoplasmic segment spans residues 711 to 923 (LRLRRSSSPA…KKKSGKKEKK (213 aa)). Disordered regions lie at residues 797–832 (SHQQAPPNTDWRFSQAQRPGTSGSQNGDDTGTWPNN) and 893–923 (ATLTNAAGKRDGKAPAGGNGNKKKSGKKEKK). Over residues 913 to 923 (NKKKSGKKEKK) the composition is skewed to basic residues.

The protein resides in the cell membrane. In terms of biological role, potential calcium-dependent cell-adhesion protein. May be involved in the establishment and maintenance of specific neuronal connections in the brain. The sequence is that of Protocadherin gamma-B4 (PCDHGB4) from Pan troglodytes (Chimpanzee).